The following is a 655-amino-acid chain: Tumor necrosis factor receptor superfamily member 21 (655 aa).

The first 41 residues, 1–41, serve as a signal peptide directing secretion; it reads MGTSASSITALASCSRIAGQVGATMVAGSLLLLGFLSTITA. Topologically, residues 42-349 are extracellular; the sequence is QPEQKTLSLT…PHKHFDINEH (308 aa). 4 TNFR-Cys repeats span residues 50 to 88, 90 to 131, 133 to 167, and 170 to 211; these read LTGT…LRVC, SCPS…DREC, CPPG…EDVR, and QCAR…DNVC. 9 disulfides stabilise this stretch: C67-C80, C70-C88, C91-C106, C109-C123, C113-C131, C133-C144, C150-C168, C171-C186, and C192-C211. N82 is a glycosylation site (N-linked (GlcNAc...) asparagine). Disordered stretches follow at residues 214 to 306 and 318 to 338; these read HLSS…GPHH and EATG…HPRQ. Residues 216–225 are compositionally biased toward low complexity; it reads SSSSTTPSSP. Composition is skewed to polar residues over residues 241-262 and 276-302; these read VPSS…TASV and PDNT…THQQ. N-linked (GlcNAc...) asparagine glycans are attached at residues N252, N278, and N289. The chain crosses the membrane as a helical span at residues 350–370; it reads LPWMIVLFLLLVLVLIVVCSI. C368 is lipidated: S-palmitoyl cysteine. Residues 371 to 655 lie on the Cytoplasmic side of the membrane; sequence RKSSRTLKKG…SVYSHLPDLL (285 aa). The 84-residue stretch at 415 to 498 folds into the Death domain; sequence GIDILKLVAA…DVVEKIRGLM (84 aa).

Associates with TRADD. Interacts with NGFR. Interacts with CASP8. Oxidized in response to reactive oxygen species (ROS), leading to endocytosis. Detected in brain (at protein level). Detected in corpus callosum oligodendrocytes. Detected in embryonic and adult brain.

The protein resides in the cell membrane. Promotes apoptosis, possibly via a pathway that involves the activation of NF-kappa-B. Can also promote apoptosis mediated by BAX and by the release of cytochrome c from the mitochondria into the cytoplasm. Trophic-factor deprivation triggers the cleavage of surface APP by beta-secretase to release sAPP-beta which is further cleaved to release an N-terminal fragment of APP (N-APP). Negatively regulates oligodendrocyte survival, maturation and myelination. Plays a role in signaling cascades triggered by stimulation of T-cell receptors, in the adaptive immune response and in the regulation of T-cell differentiation and proliferation. Negatively regulates T-cell responses and the release of cytokines such as IL4, IL5, IL10, IL13 and IFNG by Th2 cells. Negatively regulates the production of IgG, IgM and IgM in response to antigens. May inhibit the activation of JNK in response to T-cell stimulation. Also acts as a regulator of pyroptosis: recruits CASP8 in response to reactive oxygen species (ROS) and subsequent oxidation, leading to activation of GSDMC. The protein is Tumor necrosis factor receptor superfamily member 21 (Tnfrsf21) of Rattus norvegicus (Rat).